The primary structure comprises 492 residues: Ketol-acid reductoisomerase (NADP(+)) (492 aa).

The region spanning 15–208 (AQLGQCRFMD…GGDRAGVLQS (194 aa)) is the KARI N-terminal Rossmann domain. NADP(+) contacts are provided by residues 45-48 (CGAQ), Arg-68, Arg-76, Ser-78, and 108-110 (DKQ). Residue His-132 is part of the active site. Gly-158 serves as a coordination point for NADP(+). 2 consecutive KARI C-terminal knotted domains span residues 209–353 (SFIA…DEQT) and 354–486 (YFDK…MTDM). Mg(2+) contacts are provided by Asp-217, Glu-221, Glu-389, and Glu-393. Ser-414 contacts substrate.

It belongs to the ketol-acid reductoisomerase family. It depends on Mg(2+) as a cofactor.

The enzyme catalyses (2R)-2,3-dihydroxy-3-methylbutanoate + NADP(+) = (2S)-2-acetolactate + NADPH + H(+). The catalysed reaction is (2R,3R)-2,3-dihydroxy-3-methylpentanoate + NADP(+) = (S)-2-ethyl-2-hydroxy-3-oxobutanoate + NADPH + H(+). Its pathway is amino-acid biosynthesis; L-isoleucine biosynthesis; L-isoleucine from 2-oxobutanoate: step 2/4. It functions in the pathway amino-acid biosynthesis; L-valine biosynthesis; L-valine from pyruvate: step 2/4. Functionally, involved in the biosynthesis of branched-chain amino acids (BCAA). Catalyzes an alkyl-migration followed by a ketol-acid reduction of (S)-2-acetolactate (S2AL) to yield (R)-2,3-dihydroxy-isovalerate. In the isomerase reaction, S2AL is rearranged via a Mg-dependent methyl migration to produce 3-hydroxy-3-methyl-2-ketobutyrate (HMKB). In the reductase reaction, this 2-ketoacid undergoes a metal-dependent reduction by NADPH to yield (R)-2,3-dihydroxy-isovalerate. This chain is Ketol-acid reductoisomerase (NADP(+)), found in Shewanella oneidensis (strain ATCC 700550 / JCM 31522 / CIP 106686 / LMG 19005 / NCIMB 14063 / MR-1).